Consider the following 420-residue polypeptide: Putative competence-damage inducible protein (420 aa).

The protein belongs to the CinA family.

This Halalkalibacterium halodurans (strain ATCC BAA-125 / DSM 18197 / FERM 7344 / JCM 9153 / C-125) (Bacillus halodurans) protein is Putative competence-damage inducible protein.